Consider the following 932-residue polypeptide: GPI ethanolamine phosphate transferase 1 (932 aa).

Topologically, residues methionine 1–leucine 8 are cytoplasmic. Residues valine 9 to phenylalanine 29 traverse the membrane as a helical segment. The Lumenal portion of the chain corresponds to valine 30–leucine 456. N-linked (GlcNAc...) asparagine glycans are attached at residues asparagine 138, asparagine 202, and asparagine 360. A helical membrane pass occupies residues valine 457 to valine 477. Residues valine 478–threonine 486 lie on the Cytoplasmic side of the membrane. Residues serine 487–phenylalanine 507 traverse the membrane as a helical segment. At glutamine 508–lysine 509 the chain is on the lumenal side. The helical transmembrane segment at serine 510–glutamine 530 threads the bilayer. The Cytoplasmic portion of the chain corresponds to arginine 531–proline 551. Residues alanine 552–glycine 572 traverse the membrane as a helical segment. Topologically, residues tyrosine 573 to glutamate 577 are lumenal. The helical transmembrane segment at isoleucine 578–alanine 598 threads the bilayer. Residues lysine 599–proline 603 lie on the Cytoplasmic side of the membrane. The chain crosses the membrane as a helical span at residues threonine 604–valine 624. The Lumenal portion of the chain corresponds to lysine 625–glutamate 627. The chain crosses the membrane as a helical span at residues serine 628 to isoleucine 648. Topologically, residues histidine 649–lysine 653 are cytoplasmic. Residues leucine 654–threonine 674 form a helical membrane-spanning segment. Residues methionine 675–glutamine 696 lie on the Lumenal side of the membrane. The chain crosses the membrane as a helical span at residues valine 697–serine 717. The Cytoplasmic portion of the chain corresponds to aspartate 718–phenylalanine 737. Residues valine 738–isoleucine 758 form a helical membrane-spanning segment. Over tryptophan 759–methionine 786 the chain is Lumenal. A helical transmembrane segment spans residues alanine 787 to isoleucine 807. At serine 808–glycine 828 the chain is on the cytoplasmic side. The chain crosses the membrane as a helical span at residues alanine 829–leucine 849. The Lumenal segment spans residues asparagine 850–alanine 859. The chain crosses the membrane as a helical span at residues leucine 860–valine 880. Topologically, residues aspartate 881–glycine 900 are cytoplasmic. The chain crosses the membrane as a helical span at residues leucine 901–isoleucine 921. The Lumenal portion of the chain corresponds to alanine 922–methionine 932.

The protein belongs to the PIGG/PIGN/PIGO family. PIGN subfamily.

The protein resides in the endoplasmic reticulum membrane. It participates in glycolipid biosynthesis; glycosylphosphatidylinositol-anchor biosynthesis. Its function is as follows. Ethanolamine phosphate transferase involved in glycosylphosphatidylinositol-anchor biosynthesis. Transfers ethanolamine phosphate to the first alpha-1,4-linked mannose of the glycosylphosphatidylinositol precursor of GPI-anchor. This chain is GPI ethanolamine phosphate transferase 1 (MCD4), found in Yarrowia lipolytica (strain CLIB 122 / E 150) (Yeast).